The chain runs to 346 residues: Cell division protein FtsZ 2 (346 aa).

Residues 23–27, 110–112, E141, R145, and D189 contribute to the GTP site; these read GGGGN and GTG. The segment at 320-346 is disordered; sequence SNRSAQPTAPEAMNGQTAAAVPSRTLQ.

This sequence belongs to the FtsZ family. As to quaternary structure, homodimer. Polymerizes to form a dynamic ring structure in a strictly GTP-dependent manner. Interacts directly with several other division proteins.

The protein resides in the cytoplasm. Essential cell division protein that forms a contractile ring structure (Z ring) at the future cell division site. The regulation of the ring assembly controls the timing and the location of cell division. One of the functions of the FtsZ ring is to recruit other cell division proteins to the septum to produce a new cell wall between the dividing cells. Binds GTP and shows GTPase activity. This is Cell division protein FtsZ 2 from Rhizobium meliloti (strain 1021) (Ensifer meliloti).